The primary structure comprises 434 residues: Xylose isomerase (434 aa).

Residues histidine 99 and aspartate 102 contribute to the active site. 7 residues coordinate Mg(2+): glutamate 230, glutamate 266, histidine 269, aspartate 294, aspartate 305, aspartate 307, and aspartate 337.

This sequence belongs to the xylose isomerase family. In terms of assembly, homotetramer. Mg(2+) is required as a cofactor.

Its subcellular location is the cytoplasm. It catalyses the reaction alpha-D-xylose = alpha-D-xylulofuranose. The sequence is that of Xylose isomerase from Dinoroseobacter shibae (strain DSM 16493 / NCIMB 14021 / DFL 12).